Reading from the N-terminus, the 63-residue chain is Large ribosomal subunit protein uL29 (63 aa).

This sequence belongs to the universal ribosomal protein uL29 family.

In Colwellia psychrerythraea (strain 34H / ATCC BAA-681) (Vibrio psychroerythus), this protein is Large ribosomal subunit protein uL29.